The primary structure comprises 481 residues: MYDAERGWSLSFAGCGFLGFYHVGATRCLSEHAPHLLRDARMLFGASAGALHCVGVLSGIPLEQTLQVLSDLVRKARSRNIGIFHPSFNLSKFLRQGLCKCLPANVHQLISGKIGISLTRVSDGENVLVSDFRSKDEVVDALVCSCFIPFYSGLIPPSFRGVRYVDGGVSDNVPFIDAKTTITVSPFYGEYDICPKVKSTNFLHVDITKLSLRLCTGNLYLLSRAFVPPDLKVLGEICLRGYLDAFRFLEEKGICNRPQPGLKSSSEGMDPEVAMPSWANMSLDSSPESAALAVRLEGDELLDHLRLSILPWDESILDTLSPRLATALSEEMKDKGGYMSKICNLLPIRIMSYVMLPCTLPVESAIAIVQRLVTWLPDMPDDVLWLQWVTSQVFTRVLMCLLPASRSQMPVSSQQASPCTPEQDWPCWTPCSPKGCPAETKAEATPRSILRSSLNFFLGNKVPAGAEGLSTFPSFSLEKSL.

Residues Met1 to Arg41 lie on the Cytoplasmic side of the membrane. Residues Leu10–Lys179 enclose the PNPLA domain. Residues Gly14 to Gly19 carry the GXGXXG motif. Residues Met42–Leu62 form a helical; Signal-anchor for type II membrane protein membrane-spanning segment. Positions Gly45 to Gly49 match the GXSXG motif. Ser47 (nucleophile) is an active-site residue. At Glu63 to Leu481 the chain is on the lumenal side. An N-linked (GlcNAc...) asparagine glycan is attached at Asn89. Asp166 serves as the catalytic Proton acceptor. A DGA/G motif is present at residues Asp166 to Gly168. The N-linked (GlcNAc...) asparagine glycan is linked to Asn280.

The protein resides in the membrane. It is found in the lipid droplet. The catalysed reaction is a 1-acyl-sn-glycero-3-phosphate + an acyl-CoA = a 1,2-diacyl-sn-glycero-3-phosphate + CoA. It carries out the reaction a triacylglycerol + H2O = a diacylglycerol + a fatty acid + H(+). The enzyme catalyses a 1-acylglycerol + a 1,3-diacylglycerol = a triacylglycerol + glycerol. It catalyses the reaction a 1-acylglycerol + a 1,2-diacylglycerol = a triacylglycerol + glycerol. The catalysed reaction is 2 a 1-acylglycerol = a 1,2-diacylglycerol + glycerol. It carries out the reaction 1-(9Z-octadecenoyl)-sn-glycero-3-phosphate + (9Z)-octadecenoyl-CoA = 1,2-di-(9Z-octadecenoyl)-sn-glycero-3-phosphate + CoA. The enzyme catalyses 1-(9Z-octadecenoyl)-sn-glycero-3-phosphate + hexadecanoyl-CoA = 1-(9Z)-octadecenoyl-2-hexadecanoyl-sn-glycero-3-phosphate + CoA. It catalyses the reaction 1-(9Z-octadecenoyl)-sn-glycero-3-phosphate + (9Z,12Z)-octadecadienoyl-CoA = 1-(9Z)-octadecenoyl-2-(9Z,12Z)-octadecadienoyl-sn-glycero-3-phosphate + CoA. The catalysed reaction is 1-(9Z-octadecenoyl)-sn-glycero-3-phosphate + (5Z,8Z,11Z,14Z)-eicosatetraenoyl-CoA = 1-(9Z)-octadecenoyl-2-(5Z,8Z,11Z,14Z)-eicosatetraenoyl-sn-glycero-3-phosphate + CoA. It carries out the reaction 2 1-(9Z-octadecenoyl)-glycerol = 1,2-di-(9Z-octadecenoyl)-glycerol + glycerol. The enzyme catalyses 1-(9Z-octadecenoyl)-glycerol + 1,2-di-(9Z-octadecenoyl)-glycerol = 1,2,3-tri-(9Z-octadecenoyl)-glycerol + glycerol. It catalyses the reaction 1-(9Z-octadecenoyl)-glycerol + 1,3-di-(9Z-octadecenoyl)-glycerol = 1,2,3-tri-(9Z-octadecenoyl)-glycerol + glycerol. The catalysed reaction is 1,2,3-tri-(9Z-octadecenoyl)-glycerol + H2O = 1,3-di-(9Z-octadecenoyl)-glycerol + (9Z)-octadecenoate + H(+). It carries out the reaction a 1,2-diacyl-sn-glycero-3-phosphocholine + H2O = a 1-acyl-sn-glycero-3-phosphocholine + a fatty acid + H(+). The protein operates within phospholipid metabolism. Its pathway is glycerolipid metabolism. Its activity is regulated as follows. The triglyceride lipase activity is inhibited by BEL ((E)-6-(bromomethylene)-3-(1-naphthalenyl)-2H-tetrahydropyran-2-one), a suicide substrate inhibitor. In terms of biological role, specifically catalyzes coenzyme A (CoA)-dependent acylation of 1-acyl-sn-glycerol 3-phosphate (2-lysophosphatidic acid/LPA) to generate phosphatidic acid (PA), an important metabolic intermediate and precursor for both triglycerides and glycerophospholipids. Does not esterify other lysophospholipids. Acyl donors are long chain (at least C16) fatty acyl-CoAs: arachidonoyl-CoA, linoleoyl-CoA, oleoyl-CoA and at a lesser extent palmitoyl-CoA. Additionally possesses low triacylglycerol lipase and CoA-independent acylglycerol transacylase activities and thus may play a role in acyl-chain remodeling of triglycerides. In vitro may express hydrolytic activity against glycerolipids triacylglycerol, diacylglycerol and monoacylglycerol, with a strong preference for oleic acid as the acyl moiety. However, the triacylglycerol hydrolase activity is controversial and may be very low. Possesses phospholipase A2 activity. This chain is 1-acylglycerol-3-phosphate O-acyltransferase PNPLA3, found in Homo sapiens (Human).